The following is a 259-amino-acid chain: MKNLYRYSCGEGKLDFVMLHGWGMNSNAWRYIINRFGSHFRLHLFDLPGYGFSQSEESFTLPEISETVLKKAPPQAIWLGWSMGGCIASEIALRYPERVLALITVCSSPCFVSQHQWPRISWQVLSCFEQKLEDHLQNTLEQFLLLQTLGTLNSQRDTTSLKSFLFSRPLPKKEVLKAGLKILRYTDMRDSLNAISVPFLRIYGKLDALVPCKIAELLDEAWPHTESVIMHQSAHVPFISHTDDFLEVILYFYQKYFSH.

An AB hydrolase-1 domain is found at 16-241 (FVMLHGWGMN…QSAHVPFISH (226 aa)). Substrate contacts are provided by residues Trp22, 82-83 (SM), and 143-147 (FLLLQ). Ser82 serves as the catalytic Nucleophile. Catalysis depends on residues Asp207 and His235. His235 contacts substrate.

Belongs to the AB hydrolase superfamily. Carboxylesterase BioH family. In terms of assembly, monomer.

It is found in the cytoplasm. The enzyme catalyses 6-carboxyhexanoyl-[ACP] methyl ester + H2O = 6-carboxyhexanoyl-[ACP] + methanol + H(+). The protein operates within cofactor biosynthesis; biotin biosynthesis. Its function is as follows. The physiological role of BioH is to remove the methyl group introduced by BioC when the pimeloyl moiety is complete. It allows to synthesize pimeloyl-ACP via the fatty acid synthetic pathway through the hydrolysis of the ester bonds of pimeloyl-ACP esters. The chain is Pimeloyl-[acyl-carrier protein] methyl ester esterase from Hamiltonella defensa subsp. Acyrthosiphon pisum (strain 5AT).